The chain runs to 660 residues: MATSHRVAKLVASSLQTPVNPITGARVAQYEREDPLKALAAAEAILEDEEEEKVAQPAGASADLNTSFSGVDEHAPISYEDFVNFPDIHHSNEEYFKKVEELKAAHIETMAKLEKMYQDKLHLKEVQPVVIREDSLSDSSRSVSEKNSYHPVSLMTSFSEPDLGQSSSLYVSSSEEELPNLEKEYPRKNRMMTYAKELINNMWTDFCVEDYIRCKDTGFHAAEKRRKKRKEWVPTITVPEPFQMMIREQKKKEESMKSKSDIEMVHKALKKQEEDPEYKKKFRANPVPASVFLPLYHDLVKQKEERRRSLKEKSKEALLASQKPFKFIAREEQKRAAREKQLRDFLKYKKKTNRFKARPIPRSTYGSTTNDKLKEEELYRNLRTQLRAQEHLQNSSPLPCRSACGCRNPRCPEQAVKLKCKHKVRCPTPDFEDLPERYQKHLSEHKSPKLLTVCKPFDLHASPHASIKREKILADIEADEENLKETRWPYLSPRRKSPVRCAGVNPVPCNCNPPVPTVSSRGREQAVRKSEKERMREYQRELEEREEKLKKRPLLFERVAQKNARMAAEKHYSNTLKALGISDEFVSKKGQSGKVLEYFNNQETKSVTEDKESFNEEEKIEERENGEENYFIDTNSQDSYKEKDEANEESEEEKSVEESH.

Coiled-coil stretches lie at residues 93–120 (EEYF…YQDK) and 296–320 (YHDL…ALLA). The required for interaction with CFAP418 stretch occupies residues 341 to 525 (QLRDFLKYKK…PTVSSRGREQ (185 aa)). Glycyl lysine isopeptide (Lys-Gly) (interchain with G-Cter in SUMO2) cross-links involve residues Lys-468 and Lys-484. Residues 522–552 (GREQAVRKSEKERMREYQRELEEREEKLKKR) adopt a coiled-coil conformation. Residues 605–660 (KSVTEDKESFNEEEKIEERENGEENYFIDTNSQDSYKEKDEANEESEEEKSVEESH) form a disordered region. Residues 606-623 (SVTEDKESFNEEEKIEER) are compositionally biased toward basic and acidic residues. Over residues 645–660 (EANEESEEEKSVEESH) the composition is skewed to acidic residues.

It belongs to the FAM161 family. In terms of assembly, interacts (via central region) with CFAP418 (via N-terminus); the interaction is direct. Interacts (via C-terminus) with microtubules. Interacts with LCA5. Interacts with CEP290. Interacts with SDCCAG8. Interacts with FAM161B. Interacts with POC1B. Interacts with CEP78. Forms a microtubule-associated complex with POC5, CETN2 and POC1B. Interacts with CCDC15. In terms of tissue distribution, isoform 1 and isoform 3 are widely expressed with highest levels in retina and testis, with isoform 1 being the most abundant in all tissues tested.

Its subcellular location is the cytoplasm. It localises to the cytoskeleton. It is found in the cilium basal body. The protein localises to the cell projection. The protein resides in the cilium. Its subcellular location is the microtubule organizing center. It localises to the centrosome. It is found in the centriole. Involved in ciliogenesis. The chain is Protein FAM161A (FAM161A) from Homo sapiens (Human).